The primary structure comprises 295 residues: Putative 23S rRNA (guanine-N(1)-)-methyltransferase (295 aa).

Zn(2+) contacts are provided by Cys11, Cys14, Cys31, and His35. Residues Tyr74, Thr116 to Gly117, and His204 each bind S-adenosyl-L-methionine.

Belongs to the methyltransferase superfamily. RlmA family.

Confers strong resistance to mycinamicin (MM) and tylosin (TY). May function as methyltransferase. This chain is Putative 23S rRNA (guanine-N(1)-)-methyltransferase (myrA), found in Micromonospora griseorubida.